Reading from the N-terminus, the 158-residue chain is Class 10 plant pathogenesis-related protein 2D (158 aa).

Aspartate 8 serves as a coordination point for trans-zeatin. 3 residues coordinate Ca(2+): proline 32, valine 35, and isoleucine 38. The trans-zeatin site is built by glutamate 60, histidine 69, tyrosine 81, and tyrosine 83.

The protein belongs to the BetVI family.

It is found in the cytoplasm. It localises to the cytosol. In terms of biological role, class II ribonuclease (RNase). Binds to cytokinins. Interacts with melatonin. The sequence is that of Class 10 plant pathogenesis-related protein 2D from Lupinus luteus (European yellow lupine).